A 405-amino-acid chain; its full sequence is 3-hydroxy-3-methylglutaryl-coenzyme A reductase (405 aa).

Active-site charge relay system residues include glutamate 100 and aspartate 310. The active-site Proton donor is the histidine 400.

This sequence belongs to the HMG-CoA reductase family.

It carries out the reaction (R)-mevalonate + 2 NADP(+) + CoA = (3S)-3-hydroxy-3-methylglutaryl-CoA + 2 NADPH + 2 H(+). The protein operates within metabolic intermediate biosynthesis; (R)-mevalonate biosynthesis; (R)-mevalonate from acetyl-CoA: step 3/3. Functionally, converts HMG-CoA to mevalonate. This chain is 3-hydroxy-3-methylglutaryl-coenzyme A reductase (hmgA), found in Methanocaldococcus jannaschii (strain ATCC 43067 / DSM 2661 / JAL-1 / JCM 10045 / NBRC 100440) (Methanococcus jannaschii).